A 191-amino-acid chain; its full sequence is Protein Ves (191 aa).

Belongs to the Ves family.

The chain is Protein Ves from Escherichia coli O7:K1 (strain IAI39 / ExPEC).